We begin with the raw amino-acid sequence, 220 residues long: Ubiquitin-like-conjugating enzyme ATG10 (220 aa).

Cys166 serves as the catalytic Glycyl thioester intermediate.

This sequence belongs to the ATG10 family. As to quaternary structure, interacts with MAP1LC3A. By interacting with MAP1LC3A, it plays a role in the conjugation of ATG12 to ATG5. Also able to directly interact either with ATG5 or ATG7. Interacts with IRGM.

Its subcellular location is the cytoplasm. E2-like enzyme involved in autophagy. Acts as an E2-like enzyme that catalyzes the conjugation of ATG12 to ATG5. ATG12 conjugation to ATG5 is required for autophagy. Likely serves as an ATG5-recognition molecule. Not involved in ATG12 conjugation to ATG3. Plays a role in adenovirus-mediated cell lysis. The polypeptide is Ubiquitin-like-conjugating enzyme ATG10 (ATG10) (Homo sapiens (Human)).